We begin with the raw amino-acid sequence, 103 residues long: Large ribosomal subunit protein uL24 (103 aa).

The protein belongs to the universal ribosomal protein uL24 family. Part of the 50S ribosomal subunit.

One of two assembly initiator proteins, it binds directly to the 5'-end of the 23S rRNA, where it nucleates assembly of the 50S subunit. Its function is as follows. One of the proteins that surrounds the polypeptide exit tunnel on the outside of the subunit. In Endomicrobium trichonymphae, this protein is Large ribosomal subunit protein uL24.